The following is a 165-amino-acid chain: Protein C2-DOMAIN ABA-RELATED 8 (165 aa).

Methionine 1 carries the post-translational modification N-acetylmethionine. Residues 1–106 (MENLVGLLRI…QGTDIQELTN (106 aa)) form the C2 domain. 7 residues coordinate Ca(2+): arginine 21, aspartate 22, aspartate 27, aspartate 73, lysine 74, aspartate 75, and aspartate 81.

The protein belongs to the plant CAR protein family. Binds to PYR/PYL/RCAR abscisic acid intracellular receptors in an ABA-independent manner, both at the plasma membrane and in the nucleus.

The protein localises to the cell membrane. It localises to the nucleus. Its function is as follows. Stimulates the GTPase/ATPase activities of Obg-like ATPases. Mediates the transient calcium-dependent interaction of PYR/PYL/RCAR abscisic acid (ABA) receptors with the plasma membrane and thus regulates ABA sensitivity. In Arabidopsis thaliana (Mouse-ear cress), this protein is Protein C2-DOMAIN ABA-RELATED 8.